Reading from the N-terminus, the 304-residue chain is Sulfate adenylyltransferase subunit 2 1 (304 aa).

Belongs to the PAPS reductase family. CysD subfamily. Heterodimer composed of CysD, the smaller subunit, and CysN.

The enzyme catalyses sulfate + ATP + H(+) = adenosine 5'-phosphosulfate + diphosphate. The protein operates within sulfur metabolism; hydrogen sulfide biosynthesis; sulfite from sulfate: step 1/3. Its function is as follows. With CysN forms the ATP sulfurylase (ATPS) that catalyzes the adenylation of sulfate producing adenosine 5'-phosphosulfate (APS) and diphosphate, the first enzymatic step in sulfur assimilation pathway. APS synthesis involves the formation of a high-energy phosphoric-sulfuric acid anhydride bond driven by GTP hydrolysis by CysN coupled to ATP hydrolysis by CysD. This Marinobacter nauticus (strain ATCC 700491 / DSM 11845 / VT8) (Marinobacter aquaeolei) protein is Sulfate adenylyltransferase subunit 2 1.